The following is a 548-amino-acid chain: Chaperonin GroEL (548 aa).

ATP is bound by residues T30–P33, K51, D87–T91, G415, N479–A481, and D495.

It belongs to the chaperonin (HSP60) family. In terms of assembly, forms a cylinder of 14 subunits composed of two heptameric rings stacked back-to-back. Interacts with the co-chaperonin GroES.

Its subcellular location is the cytoplasm. It catalyses the reaction ATP + H2O + a folded polypeptide = ADP + phosphate + an unfolded polypeptide.. Functionally, together with its co-chaperonin GroES, plays an essential role in assisting protein folding. The GroEL-GroES system forms a nano-cage that allows encapsulation of the non-native substrate proteins and provides a physical environment optimized to promote and accelerate protein folding. This Vibrio campbellii (strain ATCC BAA-1116) protein is Chaperonin GroEL.